A 273-amino-acid chain; its full sequence is Large ribosomal subunit protein uL2 (273 aa).

The segment at 221 to 263 is disordered; sequence RGTAMNPVDHPHGGGEGRNFGKHPVTPWGVQTKGKKTRHNKRT. Residues 253–263 show a composition bias toward basic residues; sequence KGKKTRHNKRT.

This sequence belongs to the universal ribosomal protein uL2 family. In terms of assembly, part of the 50S ribosomal subunit. Forms a bridge to the 30S subunit in the 70S ribosome.

Its function is as follows. One of the primary rRNA binding proteins. Required for association of the 30S and 50S subunits to form the 70S ribosome, for tRNA binding and peptide bond formation. It has been suggested to have peptidyltransferase activity; this is somewhat controversial. Makes several contacts with the 16S rRNA in the 70S ribosome. The sequence is that of Large ribosomal subunit protein uL2 from Actinobacillus succinogenes (strain ATCC 55618 / DSM 22257 / CCUG 43843 / 130Z).